A 127-amino-acid chain; its full sequence is Glycine cleavage system H protein (127 aa).

The 83-residue stretch at 22 to 104 (KVRIGITDFA…YEKAWMIVIE (83 aa)) folds into the Lipoyl-binding domain. Lys63 carries the post-translational modification N6-lipoyllysine.

This sequence belongs to the GcvH family. In terms of assembly, the glycine cleavage system is composed of four proteins: P, T, L and H. (R)-lipoate serves as cofactor.

The glycine cleavage system catalyzes the degradation of glycine. The H protein shuttles the methylamine group of glycine from the P protein to the T protein. Its function is as follows. Is also involved in protein lipoylation via its role as an octanoyl/lipoyl carrier protein intermediate. The chain is Glycine cleavage system H protein from Geobacillus thermodenitrificans (strain NG80-2).